The chain runs to 33 residues: Cyanophlyctin-beta (33 aa).

A disulfide bond links C27 and C33.

As to expression, expressed by the skin glands.

The protein resides in the secreted. Functionally, antimicrobial peptide active against E.coli (MIC=5 uM), K.pneumoniae (MIC=10 uM), B.cereus (MIC=7 uM) and S.aureus (MIC=12 uM). Has very little hemolytic activity. The chain is Cyanophlyctin-beta from Euphlyctis cyanophlyctis (Skittering frog).